We begin with the raw amino-acid sequence, 72 residues long: UPF0270 protein YheU (72 aa).

The protein belongs to the UPF0270 family.

The protein is UPF0270 protein YheU of Salmonella arizonae (strain ATCC BAA-731 / CDC346-86 / RSK2980).